The chain runs to 521 residues: Glucose-1-phosphate adenylyltransferase small subunit, chloroplastic/amyloplastic (521 aa).

Residues 1–32 (MAASIGALKSSPSSNNCINERRNDSTRAVSSR) form a disordered region. Residues 1–72 (MAASIGALKS…RSPMIVSPKA (72 aa)) constitute a chloroplast transit peptide. Lys-268 contacts substrate. The segment at 444 to 454 (TDADRKLLAAK) is allosteric regulation.

Belongs to the bacterial/plant glucose-1-phosphate adenylyltransferase family. Heterotetramer. In terms of tissue distribution, leaves and tubers.

It is found in the plastid. The protein localises to the chloroplast. It localises to the amyloplast. The enzyme catalyses alpha-D-glucose 1-phosphate + ATP + H(+) = ADP-alpha-D-glucose + diphosphate. It functions in the pathway glycan biosynthesis; starch biosynthesis. Activated by 3'phosphoglycerate, inhibited by orthophosphate. Allosteric regulation. In terms of biological role, this protein plays a role in synthesis of starch. It catalyzes the synthesis of the activated glycosyl donor, ADP-glucose from Glc-1-P and ATP. The sequence is that of Glucose-1-phosphate adenylyltransferase small subunit, chloroplastic/amyloplastic from Solanum tuberosum (Potato).